A 486-amino-acid chain; its full sequence is Glutamyl-tRNA(Gln) amidotransferase subunit A (486 aa).

Active-site charge relay system residues include Lys-75 and Ser-150. The active-site Acyl-ester intermediate is the Ser-174.

The protein belongs to the amidase family. GatA subfamily. Heterotrimer of A, B and C subunits.

The catalysed reaction is L-glutamyl-tRNA(Gln) + L-glutamine + ATP + H2O = L-glutaminyl-tRNA(Gln) + L-glutamate + ADP + phosphate + H(+). Its function is as follows. Allows the formation of correctly charged Gln-tRNA(Gln) through the transamidation of misacylated Glu-tRNA(Gln) in organisms which lack glutaminyl-tRNA synthetase. The reaction takes place in the presence of glutamine and ATP through an activated gamma-phospho-Glu-tRNA(Gln). This Nostoc punctiforme (strain ATCC 29133 / PCC 73102) protein is Glutamyl-tRNA(Gln) amidotransferase subunit A.